The chain runs to 212 residues: Redox-sensing transcriptional repressor Rex (212 aa).

Residues 18 to 57 (LYYRFVNTLKSKGIDRVNSKAISEALNIESATIRRDFSYF) constitute a DNA-binding region (H-T-H motif). 92-97 (GVGNLG) provides a ligand contact to NAD(+).

This sequence belongs to the transcriptional regulatory Rex family. In terms of assembly, homodimer.

Its subcellular location is the cytoplasm. Functionally, modulates transcription in response to changes in cellular NADH/NAD(+) redox state. The polypeptide is Redox-sensing transcriptional repressor Rex (Staphylococcus haemolyticus (strain JCSC1435)).